Consider the following 90-residue polypeptide: DNA-directed RNA polymerase subunit omega (90 aa).

Positions Gln-70–Arg-90 are disordered.

The protein belongs to the RNA polymerase subunit omega family. As to quaternary structure, the RNAP catalytic core consists of 2 alpha, 1 beta, 1 beta' and 1 omega subunit. When a sigma factor is associated with the core the holoenzyme is formed, which can initiate transcription.

It catalyses the reaction RNA(n) + a ribonucleoside 5'-triphosphate = RNA(n+1) + diphosphate. Functionally, promotes RNA polymerase assembly. Latches the N- and C-terminal regions of the beta' subunit thereby facilitating its interaction with the beta and alpha subunits. The sequence is that of DNA-directed RNA polymerase subunit omega from Vibrio cholerae serotype O1 (strain ATCC 39541 / Classical Ogawa 395 / O395).